The sequence spans 291 residues: Insulin-like growth factor-binding protein 3 (291 aa).

An N-terminal signal peptide occupies residues 1 to 27; it reads MQRARPTLWAAALTLLVLLRGPPVARA. Residues 28 to 134 are IGF-binding; it reads GASSAGLGPV…AYLLPAPPAP (107 aa). The IGFBP N-terminal domain occupies 36–117; it reads PVVRCEPCDA…LDGRGLCVNA (82 aa). Disulfide bonds link Cys40-Cys67, Cys43-Cys69, Cys51-Cys70, Cys58-Cys73, Cys81-Cys94, and Cys88-Cys114. 2 N-linked (GlcNAc...) (complex) asparagine glycosylation sites follow: Asn116 and Asn136. Disordered stretches follow at residues 130–162 and 189–211; these read APPA…RVSD and DYES…TEYG. Residues 146-156 are compositionally biased toward low complexity; it reads AGSVESPSVSS. Ser148 is subject to Phosphoserine; by FAM20C. Over residues 191-202 the composition is skewed to polar residues; it reads ESQSTDTQNFSS. Ser194 bears the Phosphoserine; by CK2 mark. N-linked (GlcNAc...) (complex) asparagine glycosylation occurs at Asn199. A Phosphoserine; by FAM20C modification is found at Ser201. Residue Ser202 is modified to Phosphoserine; by CK2. The 76-residue stretch at 210–285 folds into the Thyroglobulin type-1 domain; that stretch reads YGPCRREMED…TTKGKEDVHC (76 aa). 3 disulfide bridges follow: Cys213–Cys240, Cys251–Cys262, and Cys264–Cys285.

As to quaternary structure, interacts with XLKD1. Binds IGF2 more than IGF1. Forms a ternary complex of about 140 to 150 kDa with IGF1 or IGF2 and a 85 kDa glycoprotein (ALS). Interacts with humanin; humanin competes with importin KPNB1 for binding to IGFBP3, blocking IGFBP3 nuclear import and IGFBP3-mediated apoptosis. Interacts with TMEM219. Interacts with RXRA; this interaction modulates the transcriptional activity of RXRA. Interacts with LRP1; this interaction mediates cell growth inhibition independent of IGF1. In terms of processing, phosphorylated by FAM20C in the extracellular medium. Phosphorylated by CK2; resulting in decreased nuclear localization. Expressed by most tissues. Present in plasma.

Its subcellular location is the secreted. The protein resides in the nucleus. Functionally, multifunctional protein that plays a critical role in regulating the availability of IGFs such as IGF1 and IGF2 to their receptors and thereby regulates IGF-mediated cellular processes including proliferation, differentiation, and apoptosis in a cell-type specific manner. Also exhibits IGF-independent antiproliferative and apoptotic effects mediated by its receptor TMEM219/IGFBP-3R. Inhibits the positive effect of humanin on insulin sensitivity. Promotes testicular germ cell apoptosis. Acts via LRP-1/alpha2M receptor, also known as TGF-beta type V receptor, to mediate cell growth inhibition independent of IGF1. Mechanistically, induces serine-specific dephosphorylation of IRS1 or IRS2 upon ligation to its receptor, leading to the inhibitory cascade. In the nucleus, interacts with transcription factors such as retinoid X receptor-alpha/RXRA to regulate transcriptional signaling and apoptosis. The sequence is that of Insulin-like growth factor-binding protein 3 (IGFBP3) from Homo sapiens (Human).